The sequence spans 1182 residues: WD repeat-containing protein on Y chromosome (1182 aa).

WD repeat units lie at residues 155 to 199 (EEIT…LRSA), 323 to 362 (RIPLGVSVFYVSEIKNILVTGGPDTFVRIWDVYISSEPSA), 366 to 405 (GHNGGIVAVFVQPEENKVYSVDYHKIIKVWDLQEHTLLQT), 456 to 495 (THAAPVSVVLYNRLFRNIVTCGLDSYIIVWDPWTGRRKII), 508 to 547 (TIDIEITAACFDPLEQFLLTGARDGSLKIWNYNNAVVVRN), 595 to 635 (FHTD…RRYN), 740 to 779 (KTGDCVLTMATDRKNRFLYTGTAFGYIKVWHIVNYCIPKA), and 823 to 862 (GHLKAINSIGFINLPKIIFSGSHDYSCRLWTQGGRYLGTL). Positions 1031–1182 (TKAGANLDQP…PKAKTDRETH (152 aa)) are disordered. Low complexity-rich tracts occupy residues 1079-1092 (GVSSGYGKVSVSQG) and 1103-1121 (TTSLSKPKTSSSPSKPKGS).

The protein is WD repeat-containing protein on Y chromosome of Drosophila virilis (Fruit fly).